Here is a 551-residue protein sequence, read N- to C-terminus: Glucans biosynthesis protein D (551 aa).

The tat-type signal signal peptide spans 1–32 (MDRRRFIKGSMAMAAVCGTSGIASLFSQAAFA).

Belongs to the OpgD/OpgG family. Post-translationally, predicted to be exported by the Tat system. The position of the signal peptide cleavage has not been experimentally proven.

It is found in the periplasm. The protein operates within glycan metabolism; osmoregulated periplasmic glucan (OPG) biosynthesis. Probably involved in the control of the structural glucose backbone of osmoregulated periplasmic glucans (OPGs). The chain is Glucans biosynthesis protein D from Escherichia coli (strain K12 / MC4100 / BW2952).